A 113-amino-acid polypeptide reads, in one-letter code: C-C motif chemokine 15 (113 aa).

A signal peptide spans methionine 1–alanine 21. 3 cysteine pairs are disulfide-bonded: cysteine 53/cysteine 77, cysteine 54/cysteine 93, and cysteine 64/cysteine 104.

This sequence belongs to the intercrine beta (chemokine CC) family. In terms of assembly, monomer. In terms of processing, the N-terminal is proteolytically cleaved by proteases associated with inflammatory responses. The processed forms CCL15(22-92), CCL15(25-92) and CCL15(29-92) exhibit increase in CCR1-mediated signaling and chemotaxis assays in vitro. In terms of tissue distribution, most abundant in heart, skeletal muscle and adrenal gland. Lower levels in placenta, liver, pancreas and bone marrow. CCL15(22-92), CCL15(25-92) and CCL15(29-92) are found in high levels in synovial fluids from rheumatoid patients.

The protein localises to the secreted. Chemotactic factor that attracts T-cells and monocytes, but not neutrophils, eosinophils, or B-cells. Acts mainly via CC chemokine receptor CCR1. Also binds to CCR3. CCL15(22-92), CCL15(25-92) and CCL15(29-92) are more potent chemoattractants than the CCL15. This Homo sapiens (Human) protein is C-C motif chemokine 15 (CCL15).